The chain runs to 203 residues: MAENAAPGLISELKLAVPWGHIAAKAWGSLQGPPVLCLHGWLDNASSFDRLIPLLPQDFYYVAMDFGGHGLSSHYSPGVPYYLQTFVSEIRRVVAALKWNRFSILGHSFGGVVGGMFFCTFPEMVDKLILLDTPLFLLESDEMENLLTYKRRAIEHVLQVEASQEPSHVFSLKQLLQRQRTALTSSAGSCVRIPSGSCRPMSC.

The AB hydrolase-1 domain occupies 33–145 (PPVLCLHGWL…FLLESDEMEN (113 aa)). S108 is an active-site residue.

This sequence belongs to the AB hydrolase superfamily.

Functionally, putative serine hydrolase. This Homo sapiens (Human) protein is Serine hydrolase-like protein (SERHL).